The sequence spans 384 residues: 3,7-dimethylxanthine N-methyltransferase 1 (384 aa).

S-adenosyl-L-homocysteine contacts are provided by Tyr18, Cys61, Asn66, Asp100, Leu101, Ser139, Phe140, and Cys156. Tyr157 provides a ligand contact to theobromine. An S-adenosyl-L-homocysteine-binding site is contributed by Cys158. Residues His160 and Trp161 each contribute to the theobromine site. Asn178 provides a ligand contact to Mg(2+). Theobromine is bound at residue Ser237. Mg(2+)-binding residues include Asp260, Phe262, and Asn263. Position 368 (Tyr368) interacts with theobromine.

This sequence belongs to the methyltransferase superfamily. Type-7 methyltransferase family. Requires Mg(2+) as cofactor. Highly expressed in developing endosperm and immature fruits (grains). Detected in young leaves and flower buds, but not in mature fruits.

The enzyme catalyses theobromine + S-adenosyl-L-methionine = caffeine + S-adenosyl-L-homocysteine + H(+). It catalyses the reaction 1,7-dimethylxanthine + S-adenosyl-L-methionine = caffeine + S-adenosyl-L-homocysteine + H(+). The catalysed reaction is 7-methylxanthine + S-adenosyl-L-methionine = theobromine + S-adenosyl-L-homocysteine + H(+). It participates in alkaloid biosynthesis. In terms of biological role, involved in the biosynthesis of caffeine. Catalyzes the conversion of 7-methylxanthine to caffeine, likely via theobromine as an intermediate. This chain is 3,7-dimethylxanthine N-methyltransferase 1, found in Coffea arabica (Arabian coffee).